Reading from the N-terminus, the 258-residue chain is Synaptosomal-associated protein 29 (258 aa).

The disordered stretch occupies residues 1 to 43; sequence MSAYPRSYNPFDEDAEDEDARPAPWSDSRDLADGPGAPADRQQ. 3 positions are modified to phosphoserine: serine 65, serine 77, and serine 114. Positions 76–107 form a coiled coil; the sequence is VSAEELVRQRGALERTEKMVDKMEQDLKTSQK. Disordered regions lie at residues 127–147 and 161–188; these read PAET…GRLK and QASH…SSEA. Residues threonine 130 and threonine 137 each carry the phosphothreonine modification. Residues 131 to 142 are compositionally biased toward polar residues; sequence PSAQNGTLTPQP. Phosphoserine occurs at positions 163, 182, 185, 204, and 210. The region spanning 196–258 is the t-SNARE coiled-coil homology domain; the sequence is RACHQRIDSN…TSTERKVRQL (63 aa).

The protein belongs to the SNAP-25 family. As to quaternary structure, forms a SNARE complex, composed of VAMP8, SNAP29 and STX17, involved in fusion of autophagosome with lysosome. Interacts with multiple syntaxins including STX6. Interacts with EIPR1. Interacts with STX17; this interaction is increased in the absence of TMEM39A.

The protein localises to the cytoplasm. The protein resides in the golgi apparatus membrane. Its subcellular location is the cytoplasmic vesicle. It localises to the autophagosome membrane. It is found in the cell projection. The protein localises to the cilium membrane. SNAREs, soluble N-ethylmaleimide-sensitive factor-attachment protein receptors, are essential proteins for fusion of cellular membranes. SNAREs localized on opposing membranes assemble to form a trans-SNARE complex, an extended, parallel four alpha-helical bundle that drives membrane fusion. SNAP29 is a SNARE involved in autophagy through the direct control of autophagosome membrane fusion with the lysososome membrane. Also plays a role in ciliogenesis by regulating membrane fusions. The polypeptide is Synaptosomal-associated protein 29 (Bos taurus (Bovine)).